A 55-amino-acid chain; its full sequence is ATP synthase F(0) complex subunit 8 (55 aa).

A helical membrane pass occupies residues 9-29 (WFAIMVFSWFVFLIFLPPKIM).

It belongs to the ATPase protein 8 family. As to quaternary structure, component of the ATP synthase complex composed at least of ATP5F1A/subunit alpha, ATP5F1B/subunit beta, ATP5MC1/subunit c (homooctomer), MT-ATP6/subunit a, MT-ATP8/subunit 8, ATP5ME/subunit e, ATP5MF/subunit f, ATP5MG/subunit g, ATP5MK/subunit k, ATP5MJ/subunit j, ATP5F1C/subunit gamma, ATP5F1D/subunit delta, ATP5F1E/subunit epsilon, ATP5PF/subunit F6, ATP5PB/subunit b, ATP5PD/subunit d, ATP5PO/subunit OSCP. ATP synthase complex consists of a soluble F(1) head domain (subunits alpha(3) and beta(3)) - the catalytic core - and a membrane F(0) domain - the membrane proton channel (subunits c, a, 8, e, f, g, k and j). These two domains are linked by a central stalk (subunits gamma, delta, and epsilon) rotating inside the F1 region and a stationary peripheral stalk (subunits F6, b, d, and OSCP).

It localises to the mitochondrion membrane. Functionally, subunit 8, of the mitochondrial membrane ATP synthase complex (F(1)F(0) ATP synthase or Complex V) that produces ATP from ADP in the presence of a proton gradient across the membrane which is generated by electron transport complexes of the respiratory chain. ATP synthase complex consist of a soluble F(1) head domain - the catalytic core - and a membrane F(1) domain - the membrane proton channel. These two domains are linked by a central stalk rotating inside the F(1) region and a stationary peripheral stalk. During catalysis, ATP synthesis in the catalytic domain of F(1) is coupled via a rotary mechanism of the central stalk subunits to proton translocation. In vivo, can only synthesize ATP although its ATP hydrolase activity can be activated artificially in vitro. Part of the complex F(0) domain. The protein is ATP synthase F(0) complex subunit 8 of Tetraodon nigroviridis (Spotted green pufferfish).